We begin with the raw amino-acid sequence, 656 residues long: Translation factor GUF1, mitochondrial (656 aa).

Residues 1-28 constitute a mitochondrion transit peptide; it reads MWKGLLQSTRAAWRGPCVRAPRLPFFRR. The region spanning 55–235 is the tr-type G domain; it reads ERYRNFSIVA…NVIENIPGPD (181 aa). Residues 64 to 71, 128 to 132, and 182 to 185 each bind GTP; these read AHVDHGKS, DTPGH, and NKID.

This sequence belongs to the TRAFAC class translation factor GTPase superfamily. Classic translation factor GTPase family. LepA subfamily.

It is found in the mitochondrion inner membrane. It catalyses the reaction GTP + H2O = GDP + phosphate + H(+). Its function is as follows. Promotes mitochondrial protein synthesis. May act as a fidelity factor of the translation reaction, by catalyzing a one-codon backward translocation of tRNAs on improperly translocated ribosomes. Binds to mitochondrial ribosomes in a GTP-dependent manner. This is Translation factor GUF1, mitochondrial from Yarrowia lipolytica (strain CLIB 122 / E 150) (Yeast).